We begin with the raw amino-acid sequence, 152 residues long: Deoxyuridine 5'-triphosphate nucleotidohydrolase (152 aa).

Substrate contacts are provided by residues 71–73, Asn84, and 88–90; these read RSG and TVD.

It belongs to the dUTPase family. Mg(2+) is required as a cofactor.

It catalyses the reaction dUTP + H2O = dUMP + diphosphate + H(+). The protein operates within pyrimidine metabolism; dUMP biosynthesis; dUMP from dCTP (dUTP route): step 2/2. Functionally, this enzyme is involved in nucleotide metabolism: it produces dUMP, the immediate precursor of thymidine nucleotides and it decreases the intracellular concentration of dUTP so that uracil cannot be incorporated into DNA. The polypeptide is Deoxyuridine 5'-triphosphate nucleotidohydrolase (Maricaulis maris (strain MCS10) (Caulobacter maris)).